Consider the following 195-residue polypeptide: MPQSNAGGRSDCIGAARDSSFGPMSSSAIPATEVVIAADCWQAEASAESVVLRAIEAAATMIDADTGDAELAVMLTDDDGVRALNASYRGIDKPTNVLSFPAPQPDYQDACQDSGGAPQMLGDIAIAYQTVRREADDEGKPFAHHLSHLAVHGFLHLVGYDHETDAEAETMESTERSILAGLGIPDPYADQDRVS.

3 residues coordinate Zn(2+): H152, H156, and H162.

This sequence belongs to the endoribonuclease YbeY family. The cofactor is Zn(2+).

The protein resides in the cytoplasm. In terms of biological role, single strand-specific metallo-endoribonuclease involved in late-stage 70S ribosome quality control and in maturation of the 3' terminus of the 16S rRNA. The sequence is that of Endoribonuclease YbeY from Rhodopseudomonas palustris (strain BisB5).